Reading from the N-terminus, the 324-residue chain is Putative GTPase PYRAB02490 (324 aa).

GTP-binding positions include 52–60 (GPPGAGKST), Asp-194, and 229–231 (VAT).

Belongs to the SIMIBI class G3E GTPase family. ArgK/MeaB subfamily.

Its function is as follows. May have GTPase activity. May also bind and hydrolyze ATP. May function as chaperone. The chain is Putative GTPase PYRAB02490 from Pyrococcus abyssi (strain GE5 / Orsay).